Here is a 291-residue protein sequence, read N- to C-terminus: Small ribosomal subunit protein uS3 (291 aa).

The KH type-2 domain occupies 39-110; that stretch reads IRLEIMKFLK…KISIKIKEVK (72 aa).

Belongs to the universal ribosomal protein uS3 family. As to quaternary structure, part of the 30S ribosomal subunit. Forms a tight complex with proteins S10 and S14.

Binds the lower part of the 30S subunit head. Binds mRNA in the 70S ribosome, positioning it for translation. The sequence is that of Small ribosomal subunit protein uS3 from Borreliella afzelii (strain PKo) (Borrelia afzelii).